The following is a 289-amino-acid chain: Glycine--tRNA ligase alpha subunit (289 aa).

The protein belongs to the class-II aminoacyl-tRNA synthetase family. In terms of assembly, tetramer of two alpha and two beta subunits.

The protein localises to the cytoplasm. It carries out the reaction tRNA(Gly) + glycine + ATP = glycyl-tRNA(Gly) + AMP + diphosphate. The polypeptide is Glycine--tRNA ligase alpha subunit (Prochlorococcus marinus subsp. pastoris (strain CCMP1986 / NIES-2087 / MED4)).